The following is a 452-amino-acid chain: Ribosomal protein uS12 methylthiotransferase RimO (452 aa).

Residues 3–122 (LTVGLISLGC…LPEIITQVMD (120 aa)) form the MTTase N-terminal domain. The [4Fe-4S] cluster site is built by C12, C48, C85, C162, C166, and C169. In terms of domain architecture, Radical SAM core spans 148–392 (LTPPHTAYIK…TLLLARLASE (245 aa)). Residues 395-452 (QEQIGRQIRVLVDAPGVARTEWDAPDIDGTVSVPLTLPVGQFATVTVTDAVAYELTAE) form the TRAM domain.

The protein belongs to the methylthiotransferase family. RimO subfamily. The cofactor is [4Fe-4S] cluster.

Its subcellular location is the cytoplasm. The enzyme catalyses L-aspartate(89)-[ribosomal protein uS12]-hydrogen + (sulfur carrier)-SH + AH2 + 2 S-adenosyl-L-methionine = 3-methylsulfanyl-L-aspartate(89)-[ribosomal protein uS12]-hydrogen + (sulfur carrier)-H + 5'-deoxyadenosine + L-methionine + A + S-adenosyl-L-homocysteine + 2 H(+). Its function is as follows. Catalyzes the methylthiolation of an aspartic acid residue of ribosomal protein uS12. The sequence is that of Ribosomal protein uS12 methylthiotransferase RimO from Akkermansia muciniphila (strain ATCC BAA-835 / DSM 22959 / JCM 33894 / BCRC 81048 / CCUG 64013 / CIP 107961 / Muc).